Consider the following 203-residue polypeptide: GTP cyclohydrolase-2 (203 aa).

49–53 (RIHSE) contributes to the GTP binding site. Zn(2+) contacts are provided by cysteine 54, cysteine 65, and cysteine 67. GTP-binding positions include glutamine 70, 92–94 (EGR), and threonine 114. Aspartate 126 serves as the catalytic Proton acceptor. The active-site Nucleophile is arginine 128. Threonine 149 and lysine 154 together coordinate GTP.

This sequence belongs to the GTP cyclohydrolase II family. It depends on Zn(2+) as a cofactor.

The enzyme catalyses GTP + 4 H2O = 2,5-diamino-6-hydroxy-4-(5-phosphoribosylamino)-pyrimidine + formate + 2 phosphate + 3 H(+). Its pathway is cofactor biosynthesis; riboflavin biosynthesis; 5-amino-6-(D-ribitylamino)uracil from GTP: step 1/4. Its function is as follows. Catalyzes the conversion of GTP to 2,5-diamino-6-ribosylamino-4(3H)-pyrimidinone 5'-phosphate (DARP), formate and pyrophosphate. The protein is GTP cyclohydrolase-2 of Shewanella sp. (strain MR-4).